Consider the following 331-residue polypeptide: 4-hydroxy-3-methylbut-2-enyl diphosphate reductase (331 aa).

Cys12 serves as a coordination point for [4Fe-4S] cluster. (2E)-4-hydroxy-3-methylbut-2-enyl diphosphate-binding residues include His43 and His81. His43 and His81 together coordinate dimethylallyl diphosphate. Isopentenyl diphosphate contacts are provided by His43 and His81. Position 103 (Cys103) interacts with [4Fe-4S] cluster. (2E)-4-hydroxy-3-methylbut-2-enyl diphosphate is bound at residue His131. His131 lines the dimethylallyl diphosphate pocket. His131 provides a ligand contact to isopentenyl diphosphate. Catalysis depends on Glu133, which acts as the Proton donor. Thr170 is a (2E)-4-hydroxy-3-methylbut-2-enyl diphosphate binding site. Cys198 is a [4Fe-4S] cluster binding site. (2E)-4-hydroxy-3-methylbut-2-enyl diphosphate contacts are provided by Ser226, Asn228, and Ser271. Positions 226, 228, and 271 each coordinate dimethylallyl diphosphate. 3 residues coordinate isopentenyl diphosphate: Ser226, Asn228, and Ser271.

This sequence belongs to the IspH family. [4Fe-4S] cluster is required as a cofactor.

It catalyses the reaction isopentenyl diphosphate + 2 oxidized [2Fe-2S]-[ferredoxin] + H2O = (2E)-4-hydroxy-3-methylbut-2-enyl diphosphate + 2 reduced [2Fe-2S]-[ferredoxin] + 2 H(+). It carries out the reaction dimethylallyl diphosphate + 2 oxidized [2Fe-2S]-[ferredoxin] + H2O = (2E)-4-hydroxy-3-methylbut-2-enyl diphosphate + 2 reduced [2Fe-2S]-[ferredoxin] + 2 H(+). The protein operates within isoprenoid biosynthesis; dimethylallyl diphosphate biosynthesis; dimethylallyl diphosphate from (2E)-4-hydroxy-3-methylbutenyl diphosphate: step 1/1. It functions in the pathway isoprenoid biosynthesis; isopentenyl diphosphate biosynthesis via DXP pathway; isopentenyl diphosphate from 1-deoxy-D-xylulose 5-phosphate: step 6/6. Its function is as follows. Catalyzes the conversion of 1-hydroxy-2-methyl-2-(E)-butenyl 4-diphosphate (HMBPP) into a mixture of isopentenyl diphosphate (IPP) and dimethylallyl diphosphate (DMAPP). Acts in the terminal step of the DOXP/MEP pathway for isoprenoid precursor biosynthesis. The polypeptide is 4-hydroxy-3-methylbut-2-enyl diphosphate reductase (Listeria monocytogenes serotype 4b (strain CLIP80459)).